Consider the following 500-residue polypeptide: Pyoverdin chromophore biosynthetic protein PvcC (500 aa).

Requires FAD as cofactor.

Its pathway is siderophore biosynthesis; pyoverdin biosynthesis. In Pseudomonas aeruginosa (strain ATCC 15692 / DSM 22644 / CIP 104116 / JCM 14847 / LMG 12228 / 1C / PRS 101 / PAO1), this protein is Pyoverdin chromophore biosynthetic protein PvcC (pvcC).